The following is a 321-amino-acid chain: Ubiquinone biosynthesis protein COQ4, mitochondrial (321 aa).

His205, Asp206, His209, and Glu221 together coordinate Zn(2+).

It belongs to the COQ4 family. As to quaternary structure, component of a multi-subunit COQ enzyme complex, composed of at least COQ3, COQ4, COQ5, COQ6, COQ7 and COQ9. Requires Zn(2+) as cofactor.

The protein resides in the mitochondrion inner membrane. The enzyme catalyses a 4-hydroxy-3-methoxy-5-(all-trans-polyprenyl)benzoate + H(+) = a 2-methoxy-6-(all-trans-polyprenyl)phenol + CO2. Its pathway is cofactor biosynthesis; ubiquinone biosynthesis. Its function is as follows. Lyase that catalyzes the C1-decarboxylation of 4-hydroxy-3-methoxy-5-(all-trans-polyprenyl)benzoic acid into 2-methoxy-6-(all-trans-polyprenyl)phenol during ubiquinone biosynthesis. This Candida tropicalis (strain ATCC MYA-3404 / T1) (Yeast) protein is Ubiquinone biosynthesis protein COQ4, mitochondrial.